The sequence spans 95 residues: MEVVLLFLCGLLAPAVLASATEQEKEKDPFHYDYQTLRIGGLVFAVVLFSVGILLILSRRCKCSFNQKPRAPGDEEAQVENLVTANATEPQKAEN.

A signal peptide spans 1 to 18; that stretch reads MEVVLLFLCGLLAPAVLA. Over 19-35 the chain is Extracellular; the sequence is SATEQEKEKDPFHYDYQ. A helical transmembrane segment spans residues 36–58; that stretch reads TLRIGGLVFAVVLFSVGILLILS. Residues 59 to 95 are Cytoplasmic-facing; the sequence is RRCKCSFNQKPRAPGDEEAQVENLVTANATEPQKAEN. The segment at 69 to 95 is disordered; the sequence is PRAPGDEEAQVENLVTANATEPQKAEN.

This sequence belongs to the FXYD family. As to quaternary structure, regulatory subunit of the sodium/potassium-transporting ATPase which is composed of a catalytic alpha subunit, a non-catalytic beta subunit and an additional regulatory subunit. The regulatory subunit, a member of the FXYD protein family, modulates the enzymatic activity in a tissue- and isoform-specific way by changing affinities of the Na+/K+-ATPase toward Na(+), K(+) or ATP.

It localises to the cell membrane. Its function is as follows. Associates with and regulates the activity of the sodium/potassium-transporting ATPase (NKA) which catalyzes the hydrolysis of ATP coupled with the exchange of Na(+) and K(+) ions across the plasma membrane. Reduces the apparent affinity for intracellular Na(+) with no change in the apparent affinity for extracellular K(+). In addition to modulating NKA kinetics, may also function as a regulator of NKA localization to the plasma membrane. The protein is FXYD domain-containing ion transport regulator 6 (FXYD6) of Bos taurus (Bovine).